We begin with the raw amino-acid sequence, 164 residues long: Protein CURVATURE THYLAKOID 1A, chloroplastic (164 aa).

The transit peptide at 1–62 (MAISVAASSS…LQKVELLKTR (62 aa)) directs the protein to the chloroplast. Alanine 63 is modified (N-acetylalanine). Residues 63–93 (ASSEETSSIDTNELITDLKEKWDGLENKSTV) are Stromal-facing. The helical transmembrane segment at 94–114 (LIYGGGAIVAVWLSSIVVGAI) threads the bilayer. At 115 to 116 (NS) the chain is on the lumenal side. The helical transmembrane segment at 117 to 137 (VPLLPKVMELVGLGYTGWFVY) threads the bilayer. At 138–164 (RYLLFKSSRKELAEDIESLKKKIAGSE) the chain is on the stromal side. The stretch at 140–164 (LLFKSSRKELAEDIESLKKKIAGSE) forms a coiled coil.

The protein belongs to the CURT family. Homo- and heterodimers and trimers.

The protein resides in the plastid. The protein localises to the chloroplast. It localises to the plastoglobule. It is found in the membrane. Its subcellular location is the chloroplast thylakoid membrane. Its function is as follows. Determines thylakoid architecture by inducing membrane curvature. This chain is Protein CURVATURE THYLAKOID 1A, chloroplastic (CURT1A), found in Arabidopsis thaliana (Mouse-ear cress).